The following is a 267-amino-acid chain: Pyridoxine/pyridoxamine 5'-phosphate oxidase (267 aa).

Residues Arg20–Tyr23 and Lys80 each bind substrate. FMN contacts are provided by residues Arg75–Lys80, Tyr90–Thr91, Arg96, Lys97, and Gln119. Substrate-binding residues include Tyr137, Arg141, and Ser145. FMN contacts are provided by residues Gln154 to Ser155 and Trp200. Arg206–His208 contacts substrate. Arg210 provides a ligand contact to FMN.

It belongs to the pyridoxamine 5'-phosphate oxidase family. As to quaternary structure, homodimer. Requires FMN as cofactor.

The enzyme catalyses pyridoxamine 5'-phosphate + O2 + H2O = pyridoxal 5'-phosphate + H2O2 + NH4(+). The catalysed reaction is pyridoxine 5'-phosphate + O2 = pyridoxal 5'-phosphate + H2O2. Its pathway is cofactor metabolism; pyridoxal 5'-phosphate salvage; pyridoxal 5'-phosphate from pyridoxamine 5'-phosphate: step 1/1. It functions in the pathway cofactor metabolism; pyridoxal 5'-phosphate salvage; pyridoxal 5'-phosphate from pyridoxine 5'-phosphate: step 1/1. Catalyzes the oxidation of either pyridoxine 5'-phosphate (PNP) or pyridoxamine 5'-phosphate (PMP) into pyridoxal 5'-phosphate (PLP). This is Pyridoxine/pyridoxamine 5'-phosphate oxidase from Frankia casuarinae (strain DSM 45818 / CECT 9043 / HFP020203 / CcI3).